Consider the following 563-residue polypeptide: Delta-1-pyrroline-5-carboxylate dehydrogenase, mitochondrial (563 aa).

A mitochondrion-targeting transit peptide spans 1 to 23 (MLPPALLRRSLLSYAWRGSGLRW). Lys-30 is subject to N6-succinyllysine. Residue Ser-43 is modified to Phosphoserine. At Lys-51 the chain carries N6-acetyllysine. N6-acetyllysine; alternate is present on residues Lys-92, Lys-98, Lys-113, Lys-129, and Lys-174. Lys-92, Lys-98, Lys-113, Lys-129, and Lys-174 each carry N6-succinyllysine; alternate. Residues Ser-207, Lys-232, and 285–289 (GSVPT) contribute to the NAD(+) site. Glu-313 serves as the catalytic Proton acceptor. The residue at position 317 (Lys-317) is an N6-acetyllysine. N6-succinyllysine is present on Lys-346. Cys-347 (nucleophile) is an active-site residue. 2 positions are modified to N6-acetyllysine: Lys-364 and Lys-375. Position 394 is an N6-succinyllysine (Lys-394). Glu-446 is a binding site for NAD(+). Residue Lys-461 is modified to N6-acetyllysine. An N6-acetyllysine; alternate modification is found at Lys-508. Lys-508 carries the N6-succinyllysine; alternate modification. Ser-512 lines the substrate pocket.

Belongs to the aldehyde dehydrogenase family. Homodimer.

The protein localises to the mitochondrion matrix. The enzyme catalyses L-glutamate 5-semialdehyde + NAD(+) + H2O = L-glutamate + NADH + 2 H(+). Its pathway is amino-acid degradation; L-proline degradation into L-glutamate; L-glutamate from L-proline: step 2/2. Irreversible conversion of delta-1-pyrroline-5-carboxylate (P5C), derived either from proline or ornithine, to glutamate. This is a necessary step in the pathway interconnecting the urea and tricarboxylic acid cycles. The preferred substrate is glutamic gamma-semialdehyde, other substrates include succinic, glutaric and adipic semialdehydes. This is Delta-1-pyrroline-5-carboxylate dehydrogenase, mitochondrial (Aldh4a1) from Rattus norvegicus (Rat).